The following is a 341-amino-acid chain: Cyanuric acid amidohydrolase (341 aa).

Residues 1-90 (MAPIEILKFP…HVTFFLRSPG (90 aa)) are RU A. Substrate-binding positions include Arg-51 and 71 to 72 (SG). The RU B stretch occupies residues 95–229 (GLSAAVGHTR…CHILVLASTS (135 aa)). Lys-144 is an active-site residue. Substrate contacts are provided by residues Arg-176 and 212 to 213 (SS). Catalysis depends on Ser-212, which acts as the Nucleophile. Positions 235-341 (LHAVSRPMAD…SLCLVYETSI (107 aa)) are RU C. Glu-273 is a binding site for Mg(2+). Residues Arg-300 and 319–320 (SG) each bind substrate. Mg(2+) contacts are provided by Ala-322, Gln-325, Gly-326, Pro-327, and Gly-330.

It belongs to the cyclic amide hydrolase (CyAH) family. As to quaternary structure, homotetramer.

The catalysed reaction is cyanurate + H2O = 1-carboxybiuret + H(+). It functions in the pathway xenobiotic degradation; atrazine degradation; biuret from cyanurate: step 1/1. Inhibited by barbituric acid. Responsible for the hydrolysis of cyanuric acid, an intermediate formed during catabolism of s-triazine based compounds in herbicides such as atrazine and polymers such as melamine. Catalyzes the hydrolytic opening of the s-triazine ring of cyanuric acid (2,4,6-trihydroxy-s-triazine) to yield carbon dioxide and carboxybiuret, which spontaneously decarboxylates to biuret. Only active on cyanuric acid and N-methylisocyanuric acid. This Sarocladium sp protein is Cyanuric acid amidohydrolase.